A 259-amino-acid chain; its full sequence is Large ribosomal subunit protein eL8 (259 aa).

The interval 1–24 (MAPKSKKVAPSPFAQPKAAKTTKN) is disordered. Residues serine 11 and serine 33 each carry the phosphoserine modification.

The protein belongs to the eukaryotic ribosomal protein eL8 family. As to quaternary structure, component of the large ribosomal subunit (LSU). Mature yeast ribosomes consist of a small (40S) and a large (60S) subunit. The 40S small subunit contains 1 molecule of ribosomal RNA (18S rRNA) and at least 33 different proteins. The large 60S subunit contains 3 rRNA molecules (25S, 5.8S and 5S rRNA) and at least 46 different proteins.

The protein localises to the cytoplasm. Its function is as follows. Component of the ribosome, a large ribonucleoprotein complex responsible for the synthesis of proteins in the cell. The small ribosomal subunit (SSU) binds messenger RNAs (mRNAs) and translates the encoded message by selecting cognate aminoacyl-transfer RNA (tRNA) molecules. The large subunit (LSU) contains the ribosomal catalytic site termed the peptidyl transferase center (PTC), which catalyzes the formation of peptide bonds, thereby polymerizing the amino acids delivered by tRNAs into a polypeptide chain. The nascent polypeptides leave the ribosome through a tunnel in the LSU and interact with protein factors that function in enzymatic processing, targeting, and the membrane insertion of nascent chains at the exit of the ribosomal tunnel. In Schizosaccharomyces pombe (strain 972 / ATCC 24843) (Fission yeast), this protein is Large ribosomal subunit protein eL8 (rpl8).